The following is a 280-amino-acid chain: Probable inactive shikimate kinase like 1, chloroplastic (280 aa).

The transit peptide at 1–54 directs the protein to the chloroplast; that stretch reads MEIFSASASLTLTGFVPRLLPLLSPQARTTLCKPLLSSSSTRLISCHSRIAPSR.

It belongs to the shikimate kinase family.

The protein localises to the plastid. It is found in the chloroplast. In terms of biological role, required for chloroplast biogenesis. The sequence is that of Probable inactive shikimate kinase like 1, chloroplastic (SKL1) from Arabidopsis thaliana (Mouse-ear cress).